Consider the following 380-residue polypeptide: Aminomethyltransferase (380 aa).

This sequence belongs to the GcvT family. As to quaternary structure, the glycine cleavage system is composed of four proteins: P, T, L and H.

The catalysed reaction is N(6)-[(R)-S(8)-aminomethyldihydrolipoyl]-L-lysyl-[protein] + (6S)-5,6,7,8-tetrahydrofolate = N(6)-[(R)-dihydrolipoyl]-L-lysyl-[protein] + (6R)-5,10-methylene-5,6,7,8-tetrahydrofolate + NH4(+). Its function is as follows. The glycine cleavage system catalyzes the degradation of glycine. This chain is Aminomethyltransferase, found in Koribacter versatilis (strain Ellin345).